The following is a 514-amino-acid chain: Lysine--tRNA ligase (514 aa).

Over residues 1-13 (MSKPNNQNQQNNQ) the composition is skewed to low complexity. The segment at 1-21 (MSKPNNQNQQNNQEPAPEDAN) is disordered. Residues Glu-422 and Glu-429 each coordinate Mg(2+).

The protein belongs to the class-II aminoacyl-tRNA synthetase family. Homodimer. It depends on Mg(2+) as a cofactor.

Its subcellular location is the cytoplasm. It carries out the reaction tRNA(Lys) + L-lysine + ATP = L-lysyl-tRNA(Lys) + AMP + diphosphate. This Psychrobacter cryohalolentis (strain ATCC BAA-1226 / DSM 17306 / VKM B-2378 / K5) protein is Lysine--tRNA ligase.